Consider the following 329-residue polypeptide: Meiotic drive suppressor wtf21 (329 aa).

Residues 1-68 form a disordered region; that stretch reads MKNNYTSLKS…RENNPSRSTD (68 aa). The segment covering 19–30 has biased composition (basic and acidic residues); that stretch reads KTDHEIDLEKGP. Helical transmembrane passes span 73–95, 110–132, 165–182, 192–214, and 290–312; these read FLIK…ICYL, WTLF…YFYE, IIIW…FVYI, ALIC…VCIP, and GIAF…IRGA.

The protein belongs to the WTF family. As to quaternary structure, homomer. Interacts with other proteins that exhibit high sequence similarity.

It localises to the spore membrane. The protein localises to the vacuole membrane. In terms of biological role, acts as a suppressor component of the dual wtf meiotic drive system, and can suppress but not confer meiotic drive by compatible poisons. Wtf meiotic drive systems promote unequal transmission of alleles from the parental zygote to progeny spores by encoding a poison and an antidote from the same locus; the poison is trans-acting and forms toxic aggregates in all spores within an ascus, wherease the antidote is spore-specific and targets aggregates for degradation by the vacuole. Meiotic drive by wtf systems therefore lead to poisoning of all progeny that do not inherit the dual poison/antidote allele, or express a compatible antidote. This chain is Meiotic drive suppressor wtf21, found in Schizosaccharomyces pombe (strain 972 / ATCC 24843) (Fission yeast).